The primary structure comprises 61 residues: Sec-independent protein translocase protein TatA (61 aa).

The helical transmembrane segment at 1–21 (MFGIGMPELIVILVIVLVVFG) threads the bilayer.

This sequence belongs to the TatA/E family. The Tat system comprises two distinct complexes: a TatABC complex, containing multiple copies of TatA, TatB and TatC subunits, and a separate TatA complex, containing only TatA subunits. Substrates initially bind to the TatABC complex, which probably triggers association of the separate TatA complex to form the active translocon.

The protein resides in the cell inner membrane. Functionally, part of the twin-arginine translocation (Tat) system that transports large folded proteins containing a characteristic twin-arginine motif in their signal peptide across membranes. TatA could form the protein-conducting channel of the Tat system. The sequence is that of Sec-independent protein translocase protein TatA from Geobacter metallireducens (strain ATCC 53774 / DSM 7210 / GS-15).